The primary structure comprises 91 residues: Long neurotoxin LNTX28 (91 aa).

A signal peptide spans 1 to 21 (MKTLLLTLVVMTIVCLDLGYT). 5 disulfides stabilise this stretch: cysteine 24/cysteine 41, cysteine 34/cysteine 62, cysteine 47/cysteine 51, cysteine 66/cysteine 77, and cysteine 78/cysteine 83.

The protein belongs to the three-finger toxin family. Long-chain subfamily. Type II alpha-neurotoxin sub-subfamily. As to expression, expressed by the venom gland.

It localises to the secreted. Its function is as follows. Binds with high affinity to muscular (alpha-1/CHRNA1) and neuronal (alpha-7/CHRNA7) nicotinic acetylcholine receptor (nAChR) and inhibits acetylcholine from binding to the receptor, thereby impairing neuromuscular and neuronal transmission. This is Long neurotoxin LNTX28 from Ophiophagus hannah (King cobra).